A 59-amino-acid polypeptide reads, in one-letter code: Bacteriocin curvacin-A (59 aa).

Residues 1 to 18 constitute a propeptide that is removed on maturation; sequence MNNVKELSMTELQTITGG. Cysteine 28 and cysteine 33 are oxidised to a cystine.

Belongs to the bacteriocin class IIA/YGNGV family.

It localises to the secreted. In terms of biological role, bactericidal activity; inhibits closely related Lactobacilli, Listeria monocytogenes and ivanovvi, Enterococcus faecalis, Carnobacterium sp and Brocothrix thermosphacta. This Latilactobacillus curvatus (Lactobacillus curvatus) protein is Bacteriocin curvacin-A (curA).